The sequence spans 470 residues: Uronate isomerase (470 aa).

This sequence belongs to the metallo-dependent hydrolases superfamily. Uronate isomerase family.

It catalyses the reaction D-glucuronate = D-fructuronate. It carries out the reaction aldehydo-D-galacturonate = keto-D-tagaturonate. It participates in carbohydrate metabolism; pentose and glucuronate interconversion. The sequence is that of Uronate isomerase from Escherichia coli O8 (strain IAI1).